The primary structure comprises 390 residues: Cold-responsive protein kinase 1 (390 aa).

The Protein kinase domain maps to phenylalanine 41–isoleucine 320. ATP-binding positions include isoleucine 47 to valine 55 and lysine 69. Phosphotyrosine is present on tyrosine 114. Catalysis depends on aspartate 169, which acts as the Proton acceptor. A phosphoserine mark is found at serine 173 and serine 202. Threonine 203 and threonine 208 each carry phosphothreonine. Tyrosine 216 carries the post-translational modification Phosphotyrosine. The segment at threonine 345–isoleucine 390 is disordered. A compositionally biased stretch (low complexity) spans asparagine 354–isoleucine 390.

The protein belongs to the protein kinase superfamily. Ser/Thr protein kinase family. As to quaternary structure, interacts with and phosphorylates 14-3-3 proteins. Binds to GRF6 at the plasma membrane. Post-translationally, autophosphorylated.

The protein resides in the cell membrane. The catalysed reaction is L-seryl-[protein] + ATP = O-phospho-L-seryl-[protein] + ADP + H(+). It catalyses the reaction L-threonyl-[protein] + ATP = O-phospho-L-threonyl-[protein] + ADP + H(+). With respect to regulation, activated by cold. Negative regulator of freezing tolerance that phosphorylates 14-3-3 proteins (e.g. GRF6) thus triggering their translocation from the cytosol to the nucleus in response to cold stress. This chain is Cold-responsive protein kinase 1, found in Arabidopsis thaliana (Mouse-ear cress).